The sequence spans 111 residues: Phosphoribosyl-ATP pyrophosphatase (111 aa).

This sequence belongs to the PRA-PH family.

The protein localises to the cytoplasm. The catalysed reaction is 1-(5-phospho-beta-D-ribosyl)-ATP + H2O = 1-(5-phospho-beta-D-ribosyl)-5'-AMP + diphosphate + H(+). It functions in the pathway amino-acid biosynthesis; L-histidine biosynthesis; L-histidine from 5-phospho-alpha-D-ribose 1-diphosphate: step 2/9. The protein is Phosphoribosyl-ATP pyrophosphatase of Pseudomonas putida (strain ATCC 700007 / DSM 6899 / JCM 31910 / BCRC 17059 / LMG 24140 / F1).